The following is a 435-amino-acid chain: Serine/threonine-protein kinase 40 (435 aa).

The region spanning 35 to 332 (FVLGPRLGNS…DVLEALSAII (298 aa)) is the Protein kinase domain. ATP-binding positions include 41 to 49 (LGNSPVPSI) and lysine 66. Aspartate 197 (proton acceptor) is an active-site residue.

This sequence belongs to the protein kinase superfamily. CAMK Ser/Thr protein kinase family.

It is found in the nucleus. The protein resides in the cytoplasm. It catalyses the reaction L-seryl-[protein] + ATP = O-phospho-L-seryl-[protein] + ADP + H(+). It carries out the reaction L-threonyl-[protein] + ATP = O-phospho-L-threonyl-[protein] + ADP + H(+). In terms of biological role, may be a negative regulator of NF-kappa-B and p53-mediated gene transcription. This Mus musculus (Mouse) protein is Serine/threonine-protein kinase 40 (Stk40).